Here is a 202-residue protein sequence, read N- to C-terminus: Ribosome maturation factor RimM (202 aa).

One can recognise a PRC barrel domain in the interval 121–202; that stretch reads KDEYYWVDLI…CITVDWQPDY (82 aa).

The protein belongs to the RimM family. Binds ribosomal protein uS19.

It localises to the cytoplasm. An accessory protein needed during the final step in the assembly of 30S ribosomal subunit, possibly for assembly of the head region. Essential for efficient processing of 16S rRNA. May be needed both before and after RbfA during the maturation of 16S rRNA. It has affinity for free ribosomal 30S subunits but not for 70S ribosomes. The chain is Ribosome maturation factor RimM from Polaromonas sp. (strain JS666 / ATCC BAA-500).